A 170-amino-acid chain; its full sequence is MENIVLIGMPLSGKSTLGRELSKILKYDLIDTDTLIEEMEDKSIKEIFKIYGEDYFREKELKIINKLKKESNKVISTGGGLPIYNKNIYELKKIGFTVYLKVPLEELIKRMVKKEYDTRPLLKNNDTKFLEEMYKNRIEIYEKAHTIICNTNYKESLITIVRTYKKWKGI.

ATP is bound at residue 11 to 16; that stretch reads LSGKST. Residue S15 participates in Mg(2+) binding. 3 residues coordinate substrate: D33, R57, and G79. R119 serves as a coordination point for ATP. Residue R137 coordinates substrate.

This sequence belongs to the shikimate kinase family. Monomer. It depends on Mg(2+) as a cofactor.

Its subcellular location is the cytoplasm. It carries out the reaction shikimate + ATP = 3-phosphoshikimate + ADP + H(+). It participates in metabolic intermediate biosynthesis; chorismate biosynthesis; chorismate from D-erythrose 4-phosphate and phosphoenolpyruvate: step 5/7. Catalyzes the specific phosphorylation of the 3-hydroxyl group of shikimic acid using ATP as a cosubstrate. The protein is Shikimate kinase of Clostridium botulinum (strain Kyoto / Type A2).